Reading from the N-terminus, the 86-residue chain is Putative membrane protein insertion efficiency factor (86 aa).

The protein belongs to the UPF0161 family.

Its subcellular location is the cell inner membrane. Functionally, could be involved in insertion of integral membrane proteins into the membrane. The sequence is that of Putative membrane protein insertion efficiency factor from Histophilus somni (strain 129Pt) (Haemophilus somnus).